Consider the following 263-residue polypeptide: Hydroxyethylthiazole kinase 1 (263 aa).

M42 provides a ligand contact to substrate. 2 residues coordinate ATP: K118 and T164. A substrate-binding site is contributed by G191.

Belongs to the Thz kinase family. Mg(2+) is required as a cofactor.

It catalyses the reaction 5-(2-hydroxyethyl)-4-methylthiazole + ATP = 4-methyl-5-(2-phosphooxyethyl)-thiazole + ADP + H(+). It participates in cofactor biosynthesis; thiamine diphosphate biosynthesis; 4-methyl-5-(2-phosphoethyl)-thiazole from 5-(2-hydroxyethyl)-4-methylthiazole: step 1/1. In terms of biological role, catalyzes the phosphorylation of the hydroxyl group of 4-methyl-5-beta-hydroxyethylthiazole (THZ). The polypeptide is Hydroxyethylthiazole kinase 1 (Clostridium botulinum (strain ATCC 19397 / Type A)).